A 187-amino-acid chain; its full sequence is Orotate phosphoribosyltransferase (187 aa).

Residues Arg-103, Lys-104, Lys-107, and 129–137 (EDVTTSGGS) contribute to the 5-phospho-alpha-D-ribose 1-diphosphate site. Positions 133 and 161 each coordinate orotate.

The protein belongs to the purine/pyrimidine phosphoribosyltransferase family. PyrE subfamily. In terms of assembly, homodimer. Requires Mg(2+) as cofactor.

The enzyme catalyses orotidine 5'-phosphate + diphosphate = orotate + 5-phospho-alpha-D-ribose 1-diphosphate. It functions in the pathway pyrimidine metabolism; UMP biosynthesis via de novo pathway; UMP from orotate: step 1/2. In terms of biological role, catalyzes the transfer of a ribosyl phosphate group from 5-phosphoribose 1-diphosphate to orotate, leading to the formation of orotidine monophosphate (OMP). In Methanosarcina mazei (strain ATCC BAA-159 / DSM 3647 / Goe1 / Go1 / JCM 11833 / OCM 88) (Methanosarcina frisia), this protein is Orotate phosphoribosyltransferase.